Consider the following 387-residue polypeptide: Protein-glutamate methylesterase/protein-glutamine glutaminase 1 (387 aa).

One can recognise a Response regulatory domain in the interval 18-136; the sequence is RVMVVDDSAV…EISGGTDFRH (119 aa). Aspartate 69 bears the 4-aspartylphosphate mark. Residues 190–387 form the CheB-type methylesterase domain; sequence PAAEERPDII…AYVLRSANKR (198 aa). Residues serine 204, histidine 233, and aspartate 329 contribute to the active site.

The protein belongs to the CheB family. In terms of processing, phosphorylated by CheA. Phosphorylation of the N-terminal regulatory domain activates the methylesterase activity.

It localises to the cytoplasm. The catalysed reaction is [protein]-L-glutamate 5-O-methyl ester + H2O = L-glutamyl-[protein] + methanol + H(+). The enzyme catalyses L-glutaminyl-[protein] + H2O = L-glutamyl-[protein] + NH4(+). Involved in chemotaxis. Part of a chemotaxis signal transduction system that modulates chemotaxis in response to various stimuli. Catalyzes the demethylation of specific methylglutamate residues introduced into the chemoreceptors (methyl-accepting chemotaxis proteins or MCP) by CheR. Also mediates the irreversible deamidation of specific glutamine residues to glutamic acid. This chain is Protein-glutamate methylesterase/protein-glutamine glutaminase 1, found in Rhodospirillum rubrum (strain ATCC 11170 / ATH 1.1.1 / DSM 467 / LMG 4362 / NCIMB 8255 / S1).